The following is a 742-amino-acid chain: Synaptic vesicle glycoprotein 2A (742 aa).

The segment at M1–D57 is interaction with SYT1. The Cytoplasmic portion of the chain corresponds to M1 to Y169. Basic and acidic residues predominate over residues G33 to F49. Residues G33–E144 are disordered. Phosphoserine occurs at positions 80 and 81. The residue at position 84 (T84) is a Phosphothreonine. The span at V122–G137 shows a compositional bias: gly residues. S127 is modified (phosphoserine). The chain crosses the membrane as a helical span at residues F170–L190. At P191–G205 the chain is on the extracellular side. The chain crosses the membrane as a helical span at residues M206–A226. Topologically, residues D227–Q233 are cytoplasmic. The helical transmembrane segment at C234 to G254 threads the bilayer. Topologically, residues Y255–R262 are extracellular. Residues L263 to F283 form a helical membrane-spanning segment. Residues L284–S294 are Cytoplasmic-facing. Residues W295–I315 form a helical membrane-spanning segment. Over P316 to R334 the chain is Extracellular. A helical transmembrane segment spans residues V335 to P355. Residues E356–T447 lie on the Cytoplasmic side of the membrane. S393 is modified (phosphoserine). Residues L448 to F468 form a helical membrane-spanning segment. The Extracellular segment spans residues P469–Y598. A Phosphotyrosine modification is found at Y480. N-linked (GlcNAc...) asparagine glycans are attached at residues N498, N548, and N573. A helical transmembrane segment spans residues F599–M619. The Cytoplasmic segment spans residues D620 to R626. The helical transmembrane segment at M627–S647 threads the bilayer. The Extracellular portion of the chain corresponds to E648–M651. A helical transmembrane segment spans residues I652–L672. The Cytoplasmic portion of the chain corresponds to T673–A685. Residues F686 to V708 form a helical membrane-spanning segment. Over G709–K712 the chain is Extracellular. The helical transmembrane segment at A713–L731 threads the bilayer. The Cytoplasmic portion of the chain corresponds to K732–Q742.

This sequence belongs to the major facilitator superfamily. In terms of assembly, interacts with SYT1/synaptotagmin-1 in a calcium-dependent manner. Binds the adapter protein complex AP-2. (Microbial infection) Interacts with C.botulinum neurotoxin type A2 (BoNT/A, botA). Interaction is improved by glycosylation of SV2. In terms of processing, phosphorylation by CK1 of the N-terminal cytoplasmic domain regulates interaction with SYT1. N-glycosylated.

It is found in the presynapse. It localises to the cytoplasmic vesicle. The protein localises to the secretory vesicle. The protein resides in the synaptic vesicle membrane. Plays a role in the control of regulated secretion in neural and endocrine cells, enhancing selectively low-frequency neurotransmission. Positively regulates vesicle fusion by maintaining the readily releasable pool of secretory vesicles. Functionally, (Microbial infection) Receptor for the C.botulinum neurotoxin type A2 (BoNT/A, botA); glycosylation is not essential but enhances the interaction. Probably also serves as a receptor for the closely related C.botulinum neurotoxin type A1. The polypeptide is Synaptic vesicle glycoprotein 2A (SV2A) (Homo sapiens (Human)).